A 102-amino-acid polypeptide reads, in one-letter code: Malonate decarboxylase acyl carrier protein (102 aa).

At Ser-27 the chain carries O-(phosphoribosyl dephospho-coenzyme A)serine.

The protein belongs to the MdcC family. Covalently binds the prosthetic group of malonate decarboxylase.

The protein localises to the cytoplasm. Functionally, subunit of malonate decarboxylase, it is an acyl carrier protein to which acetyl and malonyl thioester residues are bound via a 2'-(5''-phosphoribosyl)-3'-dephospho-CoA prosthetic group and turn over during the catalytic mechanism. The polypeptide is Malonate decarboxylase acyl carrier protein (Acinetobacter calcoaceticus).